The sequence spans 235 residues: Peroxisomal membrane protein 11C (235 aa).

At 1 to 91 the chain is on the cytoplasmic side; it reads MSTLETTRAE…LPLVLLGKSK (91 aa). A helical transmembrane segment spans residues 92 to 108; the sequence is NALLSTFLFLDQIVWLG. At 109–206 the chain is on the lumenal side; it reads RTGIYKDKER…LLQLAPKKVT (98 aa). Residues 207 to 226 form a helical membrane-spanning segment; that stretch reads PRVTGAFGFASSLISCYQLL. At 227–235 the chain is on the cytoplasmic side; it reads PSHPKSKMV.

It belongs to the peroxin-11 family. As to quaternary structure, homooligomer. Interacts with ARC5 and FIS1B on peroxisomes. Expressed in roots and developing siliques.

The protein localises to the peroxisome membrane. In terms of biological role, involved in peroxisomal proliferation. Promotes peroxisomal duplication, aggregation or elongation without fission. This Arabidopsis thaliana (Mouse-ear cress) protein is Peroxisomal membrane protein 11C (PEX11C).